Consider the following 671-residue polypeptide: DNA ligase (671 aa).

NAD(+) contacts are provided by residues 32–36, 81–82, and Glu-113; these read DAEYD and SL. Lys-115 functions as the N6-AMP-lysine intermediate in the catalytic mechanism. NAD(+) contacts are provided by Arg-136, Glu-173, Lys-290, and Lys-314. Zn(2+)-binding residues include Cys-408, Cys-411, Cys-426, and Cys-432. In terms of domain architecture, BRCT spans 593 to 671; that stretch reads EIDSPFAGKT…ETEMLRLLGS (79 aa).

Belongs to the NAD-dependent DNA ligase family. LigA subfamily. Requires Mg(2+) as cofactor. Mn(2+) is required as a cofactor.

It carries out the reaction NAD(+) + (deoxyribonucleotide)n-3'-hydroxyl + 5'-phospho-(deoxyribonucleotide)m = (deoxyribonucleotide)n+m + AMP + beta-nicotinamide D-nucleotide.. DNA ligase that catalyzes the formation of phosphodiester linkages between 5'-phosphoryl and 3'-hydroxyl groups in double-stranded DNA using NAD as a coenzyme and as the energy source for the reaction. It is essential for DNA replication and repair of damaged DNA. This is DNA ligase from Escherichia fergusonii (strain ATCC 35469 / DSM 13698 / CCUG 18766 / IAM 14443 / JCM 21226 / LMG 7866 / NBRC 102419 / NCTC 12128 / CDC 0568-73).